Reading from the N-terminus, the 157-residue chain is Eukaryotic translation initiation factor 5A-2 (157 aa).

N-acetylserine is present on S2. A Phosphoserine modification is found at S2. T7 carries the post-translational modification Phosphothreonine. Hypusine is present on K51. S74 carries the post-translational modification Phosphoserine. K86 participates in a covalent cross-link: Glycyl lysine isopeptide (Lys-Gly) (interchain with G-Cter in ubiquitin).

This sequence belongs to the eIF-5A family. In terms of assembly, homodimer. Binds to 80S ribosomes. Actively translating ribosomes show mutually exclusive binding of eIF5a (HYP2 or ANB1) and EFT1/eEF2. Interacts with DYS1 and LIA1. In terms of processing, lys-51 undergoes hypusination, a unique post-translational modification that consists in the addition of a butylamino group from spermidine to lysine side chain, leading to the formation of the unusual amino acid hypusine. eIF-5As are the only known proteins to undergo this modification, which is essential for their function.

The protein resides in the cytoplasm. Its function is as follows. Translation factor that promotes translation elongation and termination, particularly upon ribosome stalling at specific amino acid sequence contexts. Binds between the exit (E) and peptidyl (P) site of the ribosome and promotes rescue of stalled ribosome: specifically required for efficient translation of polyproline-containing peptides as well as other motifs that stall the ribosome. Acts as ribosome quality control (RQC) cofactor by joining the RQC complex to facilitate peptidyl transfer during CAT tailing step. Involved in actin dynamics and cell cycle progression, mRNA decay and probably in a pathway involved in stress response and maintenance of cell wall integrity. In Saccharomyces cerevisiae (strain ATCC 204508 / S288c) (Baker's yeast), this protein is Eukaryotic translation initiation factor 5A-2 (ANB1).